The following is a 352-amino-acid chain: Quinolinate synthase (352 aa).

2 residues coordinate iminosuccinate: His-48 and Ser-69. Cys-114 serves as a coordination point for [4Fe-4S] cluster. Iminosuccinate contacts are provided by residues 140 to 142 and Ser-157; that span reads YAN. Cys-201 contacts [4Fe-4S] cluster. Residues 227–229 and Thr-244 contribute to the iminosuccinate site; that span reads HPE. Residue Cys-298 participates in [4Fe-4S] cluster binding.

The protein belongs to the quinolinate synthase family. Type 1 subfamily. [4Fe-4S] cluster is required as a cofactor.

The protein resides in the cytoplasm. The catalysed reaction is iminosuccinate + dihydroxyacetone phosphate = quinolinate + phosphate + 2 H2O + H(+). It functions in the pathway cofactor biosynthesis; NAD(+) biosynthesis; quinolinate from iminoaspartate: step 1/1. Functionally, catalyzes the condensation of iminoaspartate with dihydroxyacetone phosphate to form quinolinate. The sequence is that of Quinolinate synthase from Pseudomonas syringae pv. tomato (strain ATCC BAA-871 / DC3000).